Here is a 422-residue protein sequence, read N- to C-terminus: MDKIVIDGGVPLRGSVATSGAKNAALPIIAGALLAEGDHLVRNVPDLADVRTLGRLLVHMGCQAERNAGEKGALWIRVPAAVQPEAPYELVKTMRASVVVLGPLVARWGKARVSLPGGCAIGARPIDQHLKGLSALGAEIRLEHGYVEATAPRGRLRGATFTFDAQTVTGTENVMMAAALAEGETLLRNCAREPEIVDLAAALVRMGARISGAGADEIRIEGVETLRPLDHVVIADRIEAGTFLAAGALPGNDVTVQGCVLEHVEALVEKLRAAGAEVLPVDGGLRVVGDGRPRPVDVRTAPHPGFPTDMQAQMMALLCLADGSSKITETVFENRFMHVQELQRLGAEIAVDGKTAVVKGVPELSGAPVMASDLRASAALVLAGLAAQGTTEVHRVYHLDRGYERIEEKLAPLGARIRREKA.

22 to 23 (KN) contacts phosphoenolpyruvate. R95 is a binding site for UDP-N-acetyl-alpha-D-glucosamine. Catalysis depends on C119, which acts as the Proton donor. C119 bears the 2-(S-cysteinyl)pyruvic acid O-phosphothioketal mark. Residues 124-128 (RPIDQ), D309, and V331 contribute to the UDP-N-acetyl-alpha-D-glucosamine site.

The protein belongs to the EPSP synthase family. MurA subfamily.

It is found in the cytoplasm. It carries out the reaction phosphoenolpyruvate + UDP-N-acetyl-alpha-D-glucosamine = UDP-N-acetyl-3-O-(1-carboxyvinyl)-alpha-D-glucosamine + phosphate. The protein operates within cell wall biogenesis; peptidoglycan biosynthesis. In terms of biological role, cell wall formation. Adds enolpyruvyl to UDP-N-acetylglucosamine. This chain is UDP-N-acetylglucosamine 1-carboxyvinyltransferase, found in Anaeromyxobacter sp. (strain Fw109-5).